We begin with the raw amino-acid sequence, 160 residues long: Cyclic pyranopterin monophosphate synthase (160 aa).

Residues 77-79 (MCH) and 114-115 (ME) contribute to the substrate site. D129 is an active-site residue.

The protein belongs to the MoaC family. Homohexamer; trimer of dimers.

It catalyses the reaction (8S)-3',8-cyclo-7,8-dihydroguanosine 5'-triphosphate = cyclic pyranopterin phosphate + diphosphate. It functions in the pathway cofactor biosynthesis; molybdopterin biosynthesis. Functionally, catalyzes the conversion of (8S)-3',8-cyclo-7,8-dihydroguanosine 5'-triphosphate to cyclic pyranopterin monophosphate (cPMP). The polypeptide is Cyclic pyranopterin monophosphate synthase (Listeria monocytogenes serotype 4a (strain HCC23)).